The primary structure comprises 143 residues: Phospholipase A2 isozymes PA3A/PA3B/PA5 (143 aa).

Ca(2+)-binding residues include Trp-10, Gly-12, and Gly-14. 3 cysteine pairs are disulfide-bonded: Cys-11-Cys-33, Cys-32-Cys-72, and Cys-39-Cys-65. His-36 is an active-site residue. Asp-37 contacts Ca(2+).

This sequence belongs to the phospholipase A2 family. Group III subfamily. Ca(2+) is required as a cofactor. As to expression, expressed by the venom gland.

The protein localises to the secreted. It catalyses the reaction a 1,2-diacyl-sn-glycero-3-phosphocholine + H2O = a 1-acyl-sn-glycero-3-phosphocholine + a fatty acid + H(+). Its function is as follows. PLA2 catalyzes the calcium-dependent hydrolysis of the 2-acyl groups in 3-sn-phosphoglycerides. This chain is Phospholipase A2 isozymes PA3A/PA3B/PA5, found in Heloderma suspectum (Gila monster).